A 116-amino-acid chain; its full sequence is Glycine-rich protein 3 short isoform (116 aa).

The N-terminal stretch at 1 to 24 (MASKTLLLLGLFAFLFIVSEMAAA) is a signal peptide. The interval 27-83 (VKSESEETVKPEQHGGGFGDNGGGRYQGGGGHGGHGGGGYQGGGGRYQGGGGRQGGG) is disordered. Positions 29-39 (SESEETVKPEQ) are enriched in basic and acidic residues. The span at 40-83 (HGGGFGDNGGGRYQGGGGHGGHGGGGYQGGGGRYQGGGGRQGGG) shows a compositional bias: gly residues. 5 consecutive repeat copies span residues 54 to 59 (GGGGHG), 62 to 67 (GGGGYQ), 68 to 73 (GGGGRY), 75 to 80 (GGGGRQ), and 81 to 86 (GGGGSY). Residues 54–86 (GGGGHGGHGGGGYQGGGGRYQGGGGRQGGGGSY) are 5 X 6 AA tandem repeats of G-G-G-G-[HYRS]-[GYQ].

This sequence belongs to the GRP family. As to quaternary structure, interacts with WAK1 (via the extracellular domain). Component of a 500 kDa complex, composed of GRP3 or GRP3-S, WAK1 and KAPP.

It localises to the secreted. It is found in the extracellular space. The protein resides in the extracellular matrix. Functionally, regulates the function of the receptor protein kinase WAK1. The sequence is that of Glycine-rich protein 3 short isoform (GRP3S) from Arabidopsis thaliana (Mouse-ear cress).